We begin with the raw amino-acid sequence, 179 residues long: Large ribosomal subunit protein uL15 (179 aa).

It belongs to the universal ribosomal protein uL15 family. Part of the 50S ribosomal subunit.

Its function is as follows. Binds to the 23S rRNA. The chain is Large ribosomal subunit protein uL15 from Archaeoglobus fulgidus (strain ATCC 49558 / DSM 4304 / JCM 9628 / NBRC 100126 / VC-16).